Consider the following 492-residue polypeptide: Glutamyl-tRNA(Gln) amidotransferase subunit A (492 aa).

Residues Lys-79 and Ser-154 each act as charge relay system in the active site. Ser-178 (acyl-ester intermediate) is an active-site residue.

The protein belongs to the amidase family. GatA subfamily. In terms of assembly, heterotrimer of A, B and C subunits.

The enzyme catalyses L-glutamyl-tRNA(Gln) + L-glutamine + ATP + H2O = L-glutaminyl-tRNA(Gln) + L-glutamate + ADP + phosphate + H(+). Functionally, allows the formation of correctly charged Gln-tRNA(Gln) through the transamidation of misacylated Glu-tRNA(Gln) in organisms which lack glutaminyl-tRNA synthetase. The reaction takes place in the presence of glutamine and ATP through an activated gamma-phospho-Glu-tRNA(Gln). The protein is Glutamyl-tRNA(Gln) amidotransferase subunit A of Acinetobacter baumannii (strain ATCC 17978 / DSM 105126 / CIP 53.77 / LMG 1025 / NCDC KC755 / 5377).